Here is a 668-residue protein sequence, read N- to C-terminus: Eukaryotic translation initiation factor 3 subunit L (668 aa).

A compositionally biased stretch (polar residues) spans 1 to 17 (MVADASQQGQSNGAAFN). The disordered stretch occupies residues 1 to 42 (MVADASQQGQSNGAAFNQQQQYQQQQQRQLFGGEEEFGDEEE). The segment covering 18–32 (QQQQYQQQQQRQLFG) has biased composition (low complexity). Residues 33 to 42 (GEEEFGDEEE) show a composition bias toward acidic residues. The PCI domain occupies 358 to 552 (SFTHILVFIM…QVVNTSDLDF (195 aa)). Residues 625-668 (AGVKAGPPAFSQRSGGAGRSSVNKSAPAPAGAWGSSKPQPSVTA) form a disordered region. The segment covering 648–662 (KSAPAPAGAWGSSKP) has biased composition (low complexity).

This sequence belongs to the eIF-3 subunit L family. In terms of assembly, component of the eukaryotic translation initiation factor 3 (eIF-3) complex.

It is found in the cytoplasm. Functionally, component of the eukaryotic translation initiation factor 3 (eIF-3) complex, which is involved in protein synthesis of a specialized repertoire of mRNAs and, together with other initiation factors, stimulates binding of mRNA and methionyl-tRNAi to the 40S ribosome. The eIF-3 complex specifically targets and initiates translation of a subset of mRNAs involved in cell proliferation. This chain is Eukaryotic translation initiation factor 3 subunit L, found in Mycosarcoma maydis (Corn smut fungus).